We begin with the raw amino-acid sequence, 1082 residues long: RhoGEF domain-containing protein gxcI (1082 aa).

Residues 1 to 15 show a composition bias toward polar residues; the sequence is MRKNSTSNPSPSHQF. Disordered stretches follow at residues 1 to 29, 59 to 78, 91 to 394, 438 to 488, and 504 to 524; these read MRKN…VNNN, DKNQ…VLPQ, YNEQ…VTSL, KQAS…SVSN, and INSF…SLSL. Low complexity-rich tracts occupy residues 20–29, 62–71, 96–109, 116–160, and 170–184; these read KNTTTVVNNN, QQQQQQQQQQ, PSSS…SSSP, LLST…SGSP, and PTIL…RQLP. Residues 185–206 show a composition bias toward pro residues; that stretch reads TRPPSPLPKLPSRPTSPVPPNP. Residues 211–244 are compositionally biased toward low complexity; sequence NTTTTNNNNNNNNNNNNNNNNNNNNNNNNNNNNN. Positions 262-276 are enriched in pro residues; sequence PIPPPNDKPAPPPRP. Residues 282–366 are compositionally biased toward low complexity; it reads TLTTPPTIAT…NNNNNSNNNK (85 aa). A compositionally biased stretch (pro residues) spans 367-379; that stretch reads PLPPTSTKPPRPK. Residues 450–473 show a composition bias toward low complexity; it reads SSLSLSTTPTSVSPSTPSSANPTP. The DH domain occupies 622–817; that stretch reads SFNKVIKEII…EKIVNDINGK (196 aa). The interval 838-994 is PH-like; sequence QQLRDQTFLK…NDIDEAINIL (157 aa). Disordered regions lie at residues 920-961 and 1017-1060; these read NNNN…NSTP and NNNN…NSNN.

GTPase-activating protein. This chain is RhoGEF domain-containing protein gxcI (gxcI), found in Dictyostelium discoideum (Social amoeba).